Reading from the N-terminus, the 357-residue chain is Cinnamyl alcohol dehydrogenase 1 (357 aa).

Cys47 lines the Zn(2+) pocket. Thr49 is a binding site for NADP(+). The Zn(2+) site is built by His69, Glu70, Cys100, Cys103, Cys106, Cys114, and Cys163. Residues Thr167, 188–193 (GLGGVG), 211–216 (SSSDKK), Thr251, Gly275, and 298–300 (SFI) each bind NADP(+).

Belongs to the zinc-containing alcohol dehydrogenase family. As to quaternary structure, homodimer. Zn(2+) is required as a cofactor. Expressed in leaves, mainly in peltate glands.

The catalysed reaction is (E)-cinnamyl alcohol + NADP(+) = (E)-cinnamaldehyde + NADPH + H(+). It catalyses the reaction (E)-coniferol + NADP(+) = (E)-coniferaldehyde + NADPH + H(+). The enzyme catalyses (E)-sinapyl alcohol + NADP(+) = (E)-sinapaldehyde + NADPH + H(+). It carries out the reaction (E)-4-coumaroyl alcohol + NADP(+) = (E)-4-coumaraldehyde + NADPH + H(+). The catalysed reaction is (E)-caffeyl alcohol + NADP(+) = (E)-caffeyl aldehyde + NADPH + H(+). The protein operates within aromatic compound metabolism; phenylpropanoid biosynthesis. Its activity is regulated as follows. 60% inhibition by 5 mM Ca(+), Mg(+) or Cu(+). Functionally, involved in the production of citral, a mixture of geranial and neral with a strong lemony scent. Reversibly oxidizes geraniol to produce geranial at half the efficiency compared with its activity with cinnamyl alcohol. Does not use nerol and neral as substrates. The sequence is that of Cinnamyl alcohol dehydrogenase 1 (CAD1) from Ocimum basilicum (Sweet basil).